The chain runs to 454 residues: Chromosomal replication initiator protein DnaA (454 aa).

Positions Met-1–Glu-80 are domain I, interacts with DnaA modulators. The tract at residues Glu-80–Ser-117 is domain II. Residues His-118–Gln-335 form a domain III, AAA+ region region. The ATP site is built by Gly-163, Gly-165, Lys-166, and Thr-167. Residues Asp-336–Ala-454 form a domain IV, binds dsDNA region.

This sequence belongs to the DnaA family. As to quaternary structure, oligomerizes as a right-handed, spiral filament on DNA at oriC.

Its subcellular location is the cytoplasm. Functionally, plays an essential role in the initiation and regulation of chromosomal replication. ATP-DnaA binds to the origin of replication (oriC) to initiate formation of the DNA replication initiation complex once per cell cycle. Binds the DnaA box (a 9 base pair repeat at the origin) and separates the double-stranded (ds)DNA. Forms a right-handed helical filament on oriC DNA; dsDNA binds to the exterior of the filament while single-stranded (ss)DNA is stabiized in the filament's interior. The ATP-DnaA-oriC complex binds and stabilizes one strand of the AT-rich DNA unwinding element (DUE), permitting loading of DNA polymerase. After initiation quickly degrades to an ADP-DnaA complex that is not apt for DNA replication. Binds acidic phospholipids. The chain is Chromosomal replication initiator protein DnaA from Haemophilus influenzae (strain ATCC 51907 / DSM 11121 / KW20 / Rd).